The chain runs to 494 residues: MNLLDPFMKMTEEQDKCISDAPSPTMSDDSAGSPCPSGSGSDTENTRPQENTFPKGDPDLKKESDEDKFPVCIREAVSQVLKGYDWTLVPMPVRVNGSSKNKPHVKRPMNAFMVWAQAARRKLADQYPHLHNAELSKTLGKLWRLLNESEKRPFVEEAERLRVQHKKDHPDYKYQPRRRKSVKNGQSEQEEGSEQTHISPNAIFKALQADSPQSSSSISEVHSPGEHSGQSQGPPTPPTTPKTDAQQPGKQDLKREGRPLAEGGRQPPHIDFRDVDIGELSSDVISNIETFDVNEFDQYLPPNGHPGVPATHGQVTTYSGTYGISSSASSPAGAGHAWMAKQQPQPPQPPAQPPAQHTLPALSGEQGPAQQRPHIKTEQLSPSHYSEQQQHSPQQQQQQQQQLGYGSFNLQHYGSSYPPITRSQYDYTEHQNSGSYYSHAAGQSGGLYSTFTYMNPTQRPMYTPIADTSGVPSIPQTHSPQHWEQPVYTQLTRP.

Disordered stretches follow at residues 1 to 66 (MNLL…ESDE) and 159 to 275 (ERLR…FRDV). Residues 27–42 (SDDSAGSPCPSGSGSD) are compositionally biased toward low complexity. Basic and acidic residues-rich tracts occupy residues 56-66 (GDPDLKKESDE) and 159-174 (ERLR…DYKY). Residues 63–103 (ESDEDKFPVCIREAVSQVLKGYDWTLVPMPVRVNGSSKNKP) are dimerization (DIM). Residues 63 to 103 (ESDEDKFPVCIREAVSQVLKGYDWTLVPMPVRVNGSSKNKP) are PQA. Phosphoserine is present on Ser64. The segment at residues 105 to 173 (VKRPMNAFMV…QHKKDHPDYK (69 aa)) is a DNA-binding region (HMG box). Ser181 is subject to Phosphoserine. A compositionally biased stretch (low complexity) spans 211–222 (SPQSSSSISEVH). Residues 224-309 (PGEHSGQSQG…LPPNGHPGVP (86 aa)) are transactivation domain (TAM). Short sequence motifs (9aaTAD) lie at residues 277–286 (IGELSSDVIS) and 292–300 (DVNEFDQYL). The span at 326 to 337 (SSASSPAGAGHA) shows a compositional bias: low complexity. Positions 326–402 (SSASSPAGAG…PQQQQQQQQQ (77 aa)) are disordered. The span at 344–353 (PQPPQPPAQP) shows a compositional bias: pro residues. The transactivation domain (TAC) stretch occupies residues 372–494 (RPHIKTEQLS…QPVYTQLTRP (123 aa)). Residue Lys376 forms a Glycyl lysine isopeptide (Lys-Gly) (interchain with G-Cter in SUMO) linkage. The span at 378 to 387 (EQLSPSHYSE) shows a compositional bias: polar residues. Low complexity predominate over residues 388–402 (QQQHSPQQQQQQQQQ). The short motif at 445–453 (GGLYSTFTY) is the 9aaTAD 3 element. Residues 462–494 (YTPIADTSGVPSIPQTHSPQHWEQPVYTQLTRP) are disordered. Over residues 470-494 (GVPSIPQTHSPQHWEQPVYTQLTRP) the composition is skewed to polar residues.

In terms of assembly, interacts with SNAI2; triggers neural crest delamination in a phosphorylation dependent manner. Interacts with UBE2I. Post-translationally, phosphorylated at Ser-181 in the developing neural tube. Phosphorylation at either Ser-64 or Ser-181 is required for sumoylation, but phosphorylation is not dependent on sumoylation. Sumoylation is enhanced by PKA. Phosphorylation is required for interaction with SNAI2 to trigger neural crest delamination and for an efficient trunk neural crest delamination, whereas sumoylation plays a less significant role. Phosphorylation and sumoylation are induced by BMP signaling pathway. In terms of processing, sumoylated at Lys-376; phosphorylation at either Ser-64 or Ser-181 is required for sumoylation. Sumoylation is induced by BMP signaling pathway.

It is found in the nucleus. Its function is as follows. Transcription factor that plays a key role in chondrocytes differentiation and skeletal development. Specifically binds the 5'-ACAAAG-3' DNA motif present in enhancers and super-enhancers and promotes expression of genes important for chondrogenesis, including COL2A1. Plays a central role in successive steps of chondrocyte differentiation. Absolutely required for precartilaginous condensation, the first step in chondrogenesis during which skeletal progenitors differentiate into prechondrocytes. Together with SOX5 and SOX6, required for overt chondrogenesis when condensed prechondrocytes differentiate into early stage chondrocytes, the second step in chondrogenesis. Later, required to direct hypertrophic maturation and block osteoblast differentiation of growth plate chondrocytes: maintains chondrocyte columnar proliferation, delays prehypertrophy and then prevents osteoblastic differentiation of chondrocytes. Also required for chondrocyte hypertrophy, both indirectly, by keeping the lineage fate of chondrocytes, and directly, by remaining present in upper hypertrophic cells. Low lipid levels are the main nutritional determinant for chondrogenic commitment of skeletal progenitor cells: when lipids levels are low, FOXO transcription factors promote expression of SOX9, which induces chondrogenic commitment and suppresses fatty acid oxidation. In addition to cartilage development, also acts as a regulator of proliferation and differentiation in epithelial stem/progenitor cells. In response to bone morphogenetic protein stimulus, phosphorylation is induced and then sumoylation, allowing cooperation with SNAI2 to trigger neural crest delamination. This chain is Transcription factor SOX-9, found in Gallus gallus (Chicken).